The following is a 632-amino-acid chain: tRNA uridine 5-carboxymethylaminomethyl modification enzyme MnmG (632 aa).

Residues 13–18 (GGGHAG), Val125, and Ser180 contribute to the FAD site. Position 273–287 (273–287 (GPRYCPSIEDKVVRF)) interacts with NAD(+). FAD is bound at residue Gln370.

It belongs to the MnmG family. Homodimer. Heterotetramer of two MnmE and two MnmG subunits. The cofactor is FAD.

Its subcellular location is the cytoplasm. Functionally, NAD-binding protein involved in the addition of a carboxymethylaminomethyl (cmnm) group at the wobble position (U34) of certain tRNAs, forming tRNA-cmnm(5)s(2)U34. The chain is tRNA uridine 5-carboxymethylaminomethyl modification enzyme MnmG from Nitrosospira multiformis (strain ATCC 25196 / NCIMB 11849 / C 71).